Here is a 257-residue protein sequence, read N- to C-terminus: Imidazole glycerol phosphate synthase subunit HisF (257 aa).

Residues aspartate 11 and aspartate 130 contribute to the active site.

This sequence belongs to the HisA/HisF family. As to quaternary structure, heterodimer of HisH and HisF.

The protein resides in the cytoplasm. It catalyses the reaction 5-[(5-phospho-1-deoxy-D-ribulos-1-ylimino)methylamino]-1-(5-phospho-beta-D-ribosyl)imidazole-4-carboxamide + L-glutamine = D-erythro-1-(imidazol-4-yl)glycerol 3-phosphate + 5-amino-1-(5-phospho-beta-D-ribosyl)imidazole-4-carboxamide + L-glutamate + H(+). The protein operates within amino-acid biosynthesis; L-histidine biosynthesis; L-histidine from 5-phospho-alpha-D-ribose 1-diphosphate: step 5/9. Functionally, IGPS catalyzes the conversion of PRFAR and glutamine to IGP, AICAR and glutamate. The HisF subunit catalyzes the cyclization activity that produces IGP and AICAR from PRFAR using the ammonia provided by the HisH subunit. This is Imidazole glycerol phosphate synthase subunit HisF from Psychromonas ingrahamii (strain DSM 17664 / CCUG 51855 / 37).